The chain runs to 193 residues: MAATTLSIATTIRSSSFSSGLASAHHFPSRPLSIEFPFSFGVSSSSTLSHRAIYLHPISAVKTPKKIKKIGSEISSLTLEESRILVDYVQDKFGVSILFSAPAAAALPPPLDNGGATASVERQTTFDVVINDVPRGNRIAVITAIRAMTSLSLSESKELIEGFPKKFKEGVTKDEAEEDKTQLEEAGAKVSIV.

The transit peptide at 1 to 59 directs the protein to the chloroplast; it reads MAATTLSIATTIRSSSFSSGLASAHHFPSRPLSIEFPFSFGVSSSSTLSHRAIYLHPIS. Over residues 170–187 the composition is skewed to basic and acidic residues; sequence GVTKDEAEEDKTQLEEAG. Residues 170 to 193 are disordered; that stretch reads GVTKDEAEEDKTQLEEAGAKVSIV.

Belongs to the bacterial ribosomal protein bL12 family.

Its subcellular location is the plastid. The protein resides in the chloroplast. The chain is Large ribosomal subunit protein bL12cy (RPL12B) from Arabidopsis thaliana (Mouse-ear cress).